The following is a 497-amino-acid chain: Inactive metallocarboxypeptidase ecm14 (497 aa).

Residues 1–28 form the signal peptide; that stretch reads MAYNKSLKSLVFILLASQIVFVLFLCYG. The propeptide occupies 29-148; sequence KSSRELGVKW…TLFESIVPDT (120 aa). The region spanning 182-492 is the Peptidase M14 domain; the sequence is SYQNLESINS…AMILYYGEFI (311 aa). Positions 248 and 251 each coordinate Zn(2+). Substrate-binding positions include 248–251 and 323–324; these read HARE and DA. A disulfide bridge links C317 with C337. H377 serves as a coordination point for Zn(2+). 378–379 provides a ligand contact to substrate; it reads SY.

This sequence belongs to the peptidase M14 family. Requires Zn(2+) as cofactor.

The protein localises to the endoplasmic reticulum. Its subcellular location is the secreted. Inactive carboxypeptidase that may play a role in cell wall organization and biogenesis. The protein is Inactive metallocarboxypeptidase ecm14 of Schizosaccharomyces pombe (strain 972 / ATCC 24843) (Fission yeast).